Here is a 228-residue protein sequence, read N- to C-terminus: Putative lipoprotein LprH (228 aa).

Positions 1–27 are cleaved as a signal peptide; that stretch reads MACLGRPGCRGWAGASLVLVVVLALAA. C28 carries the N-palmitoyl cysteine lipid modification. The S-diacylglycerol cysteine moiety is linked to residue C28. Residues 191–211 form a helical membrane-spanning segment; the sequence is GLAVVPHAVLVLSACGFKPGF.

It localises to the cell membrane. This chain is Putative lipoprotein LprH (lprH), found in Mycobacterium bovis (strain ATCC BAA-935 / AF2122/97).